Reading from the N-terminus, the 122-residue chain is Large ribosomal subunit protein bL12 (122 aa).

The protein belongs to the bacterial ribosomal protein bL12 family. In terms of assembly, homodimer. Part of the ribosomal stalk of the 50S ribosomal subunit. Forms a multimeric L10(L12)X complex, where L10 forms an elongated spine to which 2 to 4 L12 dimers bind in a sequential fashion. Binds GTP-bound translation factors.

Its function is as follows. Forms part of the ribosomal stalk which helps the ribosome interact with GTP-bound translation factors. Is thus essential for accurate translation. In Pasteurella multocida (strain Pm70), this protein is Large ribosomal subunit protein bL12.